Consider the following 91-residue polypeptide: Small ribosomal subunit protein uS19 (91 aa).

It belongs to the universal ribosomal protein uS19 family.

Protein S19 forms a complex with S13 that binds strongly to the 16S ribosomal RNA. The chain is Small ribosomal subunit protein uS19 from Pseudomonas syringae pv. tomato (strain ATCC BAA-871 / DC3000).